The sequence spans 341 residues: tRNA N6-adenosine threonylcarbamoyltransferase (341 aa).

Residues H111 and H115 each contribute to the Fe cation site. Residues 134–138 (LVSGG), D167, G180, and N272 contribute to the substrate site. D300 provides a ligand contact to Fe cation.

The protein belongs to the KAE1 / TsaD family. Fe(2+) serves as cofactor.

The protein localises to the cytoplasm. The catalysed reaction is L-threonylcarbamoyladenylate + adenosine(37) in tRNA = N(6)-L-threonylcarbamoyladenosine(37) in tRNA + AMP + H(+). Required for the formation of a threonylcarbamoyl group on adenosine at position 37 (t(6)A37) in tRNAs that read codons beginning with adenine. Is involved in the transfer of the threonylcarbamoyl moiety of threonylcarbamoyl-AMP (TC-AMP) to the N6 group of A37, together with TsaE and TsaB. TsaD likely plays a direct catalytic role in this reaction. This chain is tRNA N6-adenosine threonylcarbamoyltransferase, found in Blochmanniella pennsylvanica (strain BPEN).